The primary structure comprises 693 residues: Elongation factor G (693 aa).

The tr-type G domain maps to 8-282; it reads KNTRNIGIMA…AVIDYLPSPL (275 aa). Residues 17-24, 81-85, and 135-138 each bind GTP; these read AHIDAGKT, DTPGH, and NKMD.

The protein belongs to the TRAFAC class translation factor GTPase superfamily. Classic translation factor GTPase family. EF-G/EF-2 subfamily.

It is found in the cytoplasm. Its function is as follows. Catalyzes the GTP-dependent ribosomal translocation step during translation elongation. During this step, the ribosome changes from the pre-translocational (PRE) to the post-translocational (POST) state as the newly formed A-site-bound peptidyl-tRNA and P-site-bound deacylated tRNA move to the P and E sites, respectively. Catalyzes the coordinated movement of the two tRNA molecules, the mRNA and conformational changes in the ribosome. This is Elongation factor G from Staphylococcus epidermidis (strain ATCC 35984 / DSM 28319 / BCRC 17069 / CCUG 31568 / BM 3577 / RP62A).